The sequence spans 571 residues: uncharacterized protein (571 aa).

5 consecutive transmembrane segments (helical) span residues 10-29, 36-55, 65-87, 96-118, and 166-188; these read VRLH…HFIG, VSLG…GLLF, WAFF…FASL, ALAV…LFRF, and ATTY…PRLL. The RCK C-terminal domain maps to 294-378; sequence TEVDDQELLS…IATAARNLGF (85 aa). Helical transmembrane passes span 388–406, 411–433, 446–465, 480–502, 509–531, and 546–568; these read LVYL…LLQV, VPLG…WLYS, LRLL…GLAA, LFAK…GLLL, LPPV…LNAL, and VPFA…CAVA.

The protein belongs to the AAE transporter (TC 2.A.81) family.

The protein resides in the cell membrane. This is an uncharacterized protein from Bordetella parapertussis (strain 12822 / ATCC BAA-587 / NCTC 13253).